Here is a 186-residue protein sequence, read N- to C-terminus: Transcription factor FapR (186 aa).

The MaoC-like domain occupies 98-168 (FTKTQIARGH…YVIEVNSYVR (71 aa)).

This sequence belongs to the FapR family.

Its function is as follows. Transcriptional factor involved in regulation of membrane lipid biosynthesis by repressing genes involved in fatty acid and phospholipid metabolism. This is Transcription factor FapR from Staphylococcus haemolyticus (strain JCSC1435).